A 617-amino-acid chain; its full sequence is BPI fold-containing family B member 4 (617 aa).

The N-terminal stretch at 1–17 is a signal peptide; that stretch reads MWTAWCVAALSVAAVCG. Positions 124–149 are disordered; sequence RPSDSAYHRGPGRYRSAADPSSAGRL. N275 carries an N-linked (GlcNAc...) asparagine glycan. A disulfide bridge connects residues C297 and C334.

It belongs to the BPI/LBP/Plunc superfamily. BPI/LBP family. As to expression, highly expressed in olfactory mucosa but undetectable in thymus, kidney, lung, brain, spleen and liver.

It is found in the secreted. The protein resides in the cytoplasm. May have the capacity to recognize and bind specific classes of odorants. May act as a carrier molecule, transporting odorants across the mucus layer to access receptor sites. May serve as a primary defense mechanism by recognizing and removing potentially harmful odorants or pathogenic microorganisms from the mucosa or clearing excess odorant from mucus to enable new odorant stimuli to be received. This Rattus norvegicus (Rat) protein is BPI fold-containing family B member 4 (Bpifb4).